Reading from the N-terminus, the 868-residue chain is Translation initiation factor IF-2 (868 aa).

Positions 103–183 (RSELPETSDR…RQAAAERETV (81 aa)) are enriched in basic and acidic residues. The disordered stretch occupies residues 103-274 (RSELPETSDR…GRPMLMPEQK (172 aa)). Over residues 190–207 (VAAPPIPRPAPEPRPPAR) the composition is skewed to pro residues. Residues 213-254 (PKAEAPRAHPAERETEARGDKRSAGLSRKDEYRELQGDDFRK) show a composition bias toward basic and acidic residues. Residues 255–264 (GGGKRKKPKT) show a composition bias toward basic residues. In terms of domain architecture, tr-type G spans 369 to 538 (PRPPVVTIMG…LVQAEVLELK (170 aa)). The tract at residues 378–385 (GHVDHGKT) is G1. Residue 378 to 385 (GHVDHGKT) coordinates GTP. The interval 403–407 (GITQH) is G2. The interval 424-427 (DTPG) is G3. GTP is bound by residues 424-428 (DTPGH) and 478-481 (NKMD). The segment at 478 to 481 (NKMD) is G4. A G5 region spans residues 514 to 516 (SAK).

The protein belongs to the TRAFAC class translation factor GTPase superfamily. Classic translation factor GTPase family. IF-2 subfamily.

The protein resides in the cytoplasm. Its function is as follows. One of the essential components for the initiation of protein synthesis. Protects formylmethionyl-tRNA from spontaneous hydrolysis and promotes its binding to the 30S ribosomal subunits. Also involved in the hydrolysis of GTP during the formation of the 70S ribosomal complex. This chain is Translation initiation factor IF-2, found in Methylococcus capsulatus (strain ATCC 33009 / NCIMB 11132 / Bath).